We begin with the raw amino-acid sequence, 215 residues long: Vesicle-trafficking protein SEC22b (215 aa).

At 2–194 (VLLTMIARVA…KYLNMRSTYA (193 aa)) the chain is on the cytoplasmic side. One can recognise a Longin domain in the interval 6–119 (MIARVADGLP…YSFIEFDTFI (114 aa)). K38 carries the post-translational modification N6-acetyllysine. In terms of domain architecture, v-SNARE coiled-coil homology spans 134 to 194 (NLGSINTELQ…KYLNMRSTYA (61 aa)). A Phosphoserine modification is found at S137. The residue at position 140 (T140) is a Phosphothreonine. Phosphoserine occurs at positions 164, 168, 174, and 177. Residues 195 to 215 (KLAAVAVFFIMLIVYVRFWWL) form a helical; Anchor for type IV membrane protein membrane-spanning segment.

Belongs to the synaptobrevin family. As to quaternary structure, interacts with STX17. Component of two distinct SNARE complexes consisting of STX5, GOSR2/BOS1, BET1 and SEC22B or STX18, USE1L, BNIP1/SEC20L and SEC22B. YKT6 can probably replace SEC22B in either complex. Interacts with the COPII Sec23/24 complex composed of SEC23A and SEC24A; recruits SEC22B into COPII-coated vesicles to allow its transport from the endoplasmic reticulum to the Golgi. Interacts with BET1.

Its subcellular location is the endoplasmic reticulum membrane. It localises to the endoplasmic reticulum-Golgi intermediate compartment membrane. The protein localises to the golgi apparatus. It is found in the cis-Golgi network membrane. The protein resides in the trans-Golgi network membrane. Its subcellular location is the melanosome. Its function is as follows. SNARE involved in targeting and fusion of ER-derived transport vesicles with the Golgi complex as well as Golgi-derived retrograde transport vesicles with the ER. This is Vesicle-trafficking protein SEC22b (SEC22B) from Homo sapiens (Human).